Here is a 199-residue protein sequence, read N- to C-terminus: MTNKSPHPSIILGSTSPYRAALLQKLNLNFQQAAPYFDEQITPTSLAPRDIAINFAKEKAESLREQFPDHLIIGSDQTAALNGLLLRKPGDKATAIKQLAACSGESVTFYSGLALINTRLNTTRTCVDWQTVYFRDLSREEIERYIELEKPYDCVGSFKVEGLGISLFEKIEGKDPNTLIGLPLIELITLLKKEGLRIP.

D76 (proton acceptor) is an active-site residue.

Belongs to the Maf family. YceF subfamily. A divalent metal cation is required as a cofactor.

It localises to the cytoplasm. It catalyses the reaction N(7)-methyl-GTP + H2O = N(7)-methyl-GMP + diphosphate + H(+). Functionally, nucleoside triphosphate pyrophosphatase that hydrolyzes 7-methyl-GTP (m(7)GTP). May have a dual role in cell division arrest and in preventing the incorporation of modified nucleotides into cellular nucleic acids. The chain is 7-methyl-GTP pyrophosphatase from Hahella chejuensis (strain KCTC 2396).